Here is a 290-residue protein sequence, read N- to C-terminus: 33 kDa chaperonin (290 aa).

Disulfide bonds link Cys-235/Cys-237 and Cys-268/Cys-271.

It belongs to the HSP33 family. Post-translationally, under oxidizing conditions two disulfide bonds are formed involving the reactive cysteines. Under reducing conditions zinc is bound to the reactive cysteines and the protein is inactive.

It localises to the cytoplasm. Its function is as follows. Redox regulated molecular chaperone. Protects both thermally unfolding and oxidatively damaged proteins from irreversible aggregation. Plays an important role in the bacterial defense system toward oxidative stress. The chain is 33 kDa chaperonin from Streptococcus sanguinis (strain SK36).